We begin with the raw amino-acid sequence, 382 residues long: MGSGEPNPAGKKKKYLKAALYVGDLDPDVTEDMLYKKFRPAGPLRFTRICRDPVTRSPLGYGYVNFRFPADAEWALNTMNFDLINGKPFRLMWSQPDDRLRKSGVGNIFIKNLDKSIDNRALFYLFSAFGNILSCKVVCDDNGSKGYAYVHFDSLAAANRAIWHMNGVRLNNRQVYVGRFKFPEERAAEVRTRDRATFTNVFVKNIGDDIDDEKLKELFCEYGPTESVKVIRDASGKSKGFGFVRYETHEAAQKAVLDLHGKSIDGKVLYVGRAQKKIERLAELRRRFERLRLKEKSRPPGVPIYIKNLDETINDEKLKEEFSSFGSISRAKVMMEVGQGKGFGVVCFSSFEEATKAVDEMNGRVVGSKPLHVTLGQARRRC.

4 RRM domains span residues Ala-18–Pro-96, Gly-106–Phe-182, Thr-199–Lys-276, and Val-302–Ala-378.

The protein resides in the cytoplasm. Binds the poly(A) tail of mRNA. May be involved in cytoplasmic regulatory processes of mRNA metabolism. Can probably bind to cytoplasmic RNA sequences other than poly(A) in vivo. This is Polyadenylate-binding protein 5 (PABPC5) from Macaca mulatta (Rhesus macaque).